We begin with the raw amino-acid sequence, 195 residues long: Nucleoid occlusion factor SlmA (195 aa).

The 61-residue stretch at 6–66 folds into the HTH tetR-type domain; that stretch reads PSRRESILQA…ALIEFAEEAV (61 aa). The segment at residues 29-48 is a DNA-binding region (H-T-H motif); it reads TTAGLAKTVGVTEAALYRHF. The stretch at 118–138 forms a coiled coil; sequence RKRASQFFERLETQIRQALKE.

It belongs to the nucleoid occlusion factor SlmA family. As to quaternary structure, homodimer. Interacts with FtsZ.

Its subcellular location is the cytoplasm. It localises to the nucleoid. Required for nucleoid occlusion (NO) phenomenon, which prevents Z-ring formation and cell division over the nucleoid. Acts as a DNA-associated cell division inhibitor that binds simultaneously chromosomal DNA and FtsZ, and disrupts the assembly of FtsZ polymers. SlmA-DNA-binding sequences (SBS) are dispersed on non-Ter regions of the chromosome, preventing FtsZ polymerization at these regions. The polypeptide is Nucleoid occlusion factor SlmA (Marinobacter nauticus (strain ATCC 700491 / DSM 11845 / VT8) (Marinobacter aquaeolei)).